Consider the following 364-residue polypeptide: Histidinol-phosphate aminotransferase (364 aa).

At lysine 226 the chain carries N6-(pyridoxal phosphate)lysine.

It belongs to the class-II pyridoxal-phosphate-dependent aminotransferase family. Histidinol-phosphate aminotransferase subfamily. In terms of assembly, homodimer. The cofactor is pyridoxal 5'-phosphate.

The catalysed reaction is L-histidinol phosphate + 2-oxoglutarate = 3-(imidazol-4-yl)-2-oxopropyl phosphate + L-glutamate. It participates in amino-acid biosynthesis; L-histidine biosynthesis; L-histidine from 5-phospho-alpha-D-ribose 1-diphosphate: step 7/9. The protein is Histidinol-phosphate aminotransferase of Campylobacter jejuni subsp. jejuni serotype O:6 (strain 81116 / NCTC 11828).